A 180-amino-acid polypeptide reads, in one-letter code: Large ribosomal subunit protein uL10 (180 aa).

The tract at residues 161 to 180 (SKAEGSEETESNETTETVEE) is disordered. The span at 166-180 (SEETESNETTETVEE) shows a compositional bias: acidic residues.

This sequence belongs to the universal ribosomal protein uL10 family. In terms of assembly, part of the ribosomal stalk of the 50S ribosomal subunit. The N-terminus interacts with L11 and the large rRNA to form the base of the stalk. The C-terminus forms an elongated spine to which L12 dimers bind in a sequential fashion forming a multimeric L10(L12)X complex.

In terms of biological role, forms part of the ribosomal stalk, playing a central role in the interaction of the ribosome with GTP-bound translation factors. This is Large ribosomal subunit protein uL10 from Finegoldia magna (strain ATCC 29328 / DSM 20472 / WAL 2508) (Peptostreptococcus magnus).